The primary structure comprises 132 residues: Histone H2A.2 (132 aa).

It belongs to the histone H2A family. As to quaternary structure, the nucleosome is a histone octamer containing two molecules each of H2A, H2B, H3 and H4 assembled in one H3-H4 heterotetramer and two H2A-H2B heterodimers. The octamer wraps approximately 147 bp of DNA.

Its subcellular location is the nucleus. The protein localises to the chromosome. Functionally, core component of nucleosome. Nucleosomes wrap and compact DNA into chromatin, limiting DNA accessibility to the cellular machineries which require DNA as a template. Histones thereby play a central role in transcription regulation, DNA repair, DNA replication and chromosomal stability. DNA accessibility is regulated via a complex set of post-translational modifications of histones, also called histone code, and nucleosome remodeling. This chain is Histone H2A.2, found in Leishmania infantum.